We begin with the raw amino-acid sequence, 533 residues long: Retinoic acid receptor RXR-beta (533 aa).

The tract at residues 1–23 (MSWAARPPFLPQRHAAGQCGPVG) is disordered. Residues 1-204 (MSWAARPPFL…PGGPGAGKRL (204 aa)) are modulating. At arginine 25 the chain carries Omega-N-methylarginine. The interval 36–181 (WRRRRPWLDP…GSGPPEDVKP (146 aa)) is disordered. Residues 46-61 (AAAAAAAVAGGEQQTP) show a composition bias toward low complexity. Over residues 67 to 82 (EAGRDGMGDSGRDSRS) the composition is skewed to basic and acidic residues. Composition is skewed to pro residues over residues 89 to 109 (NPLPQGVPPPSPPGPPLPPST) and 118 to 131 (APPPPPMPPPPLGS). Positions 132 to 143 (PFPVISSSMGSP) are enriched in low complexity. Residues 144-153 (GLPPPAPPGF) show a composition bias toward pro residues. 2 NR C4-type zinc fingers span residues 205–225 (CAICGDRSSGKHYGVYSCEGC) and 241–265 (CRDNKDCTVDKRQRNRCQYCRYQKC). A DNA-binding region (nuclear receptor) is located at residues 205–270 (CAICGDRSSG…RYQKCLATGM (66 aa)). A hinge region spans residues 271-295 (KREAVQEERQRGKDKDGDGEGAGGA). Residues 276–288 (QEERQRGKDKDGD) show a composition bias toward basic and acidic residues. Disordered regions lie at residues 276–299 (QEERQRGKDKDGDGEGAGGAPEEM) and 313–336 (QKSDQGVEGPGGTGGSGSSPNDPV). One can recognise an NR LBD domain in the interval 296-529 (PEEMPVDRIL…TFLMEMLEAP (234 aa)). Positions 320 to 329 (EGPGGTGGSG) are enriched in gly residues.

This sequence belongs to the nuclear hormone receptor family. NR2 subfamily. Homodimer (in vitro). Heterodimer with other retinoic acid receptor family members. Binds DNA preferentially as a RAR/RXR heterodimer. Interacts with NR1H3. Interacts with AKAP13. As to expression, expressed in aortic endothelial cells (at protein level). Expressed in monocytes. Expressed in a variety of tumor cell lines.

It localises to the nucleus. It is found in the cytoplasm. Its function is as follows. Receptor for retinoic acid. Retinoic acid receptors bind as heterodimers to their target response elements in response to their ligands, all-trans or 9-cis retinoic acid, and regulate gene expression in various biological processes. The RAR/RXR heterodimers bind to the retinoic acid response elements (RARE). The chain is Retinoic acid receptor RXR-beta (RXRB) from Homo sapiens (Human).